The chain runs to 365 residues: 1-deoxy-D-xylulose 5-phosphate reductoisomerase (365 aa).

Residues Thr7, Gly8, Ser9, Ile10, Ala31, Lys32, Asn33, and Asn114 each contribute to the NADPH site. Lys115 is a 1-deoxy-D-xylulose 5-phosphate binding site. Glu116 contributes to the NADPH binding site. Asp134 contacts Mn(2+). 1-deoxy-D-xylulose 5-phosphate contacts are provided by Ser135, Glu136, Ser158, and His181. Glu136 lines the Mn(2+) pocket. An NADPH-binding site is contributed by Gly187. The 1-deoxy-D-xylulose 5-phosphate site is built by Ser194, Asn199, Lys200, and Glu203. Glu203 provides a ligand contact to Mn(2+).

This sequence belongs to the DXR family. It depends on Mg(2+) as a cofactor. Mn(2+) serves as cofactor.

It carries out the reaction 2-C-methyl-D-erythritol 4-phosphate + NADP(+) = 1-deoxy-D-xylulose 5-phosphate + NADPH + H(+). Its pathway is isoprenoid biosynthesis; isopentenyl diphosphate biosynthesis via DXP pathway; isopentenyl diphosphate from 1-deoxy-D-xylulose 5-phosphate: step 1/6. Its function is as follows. Catalyzes the NADPH-dependent rearrangement and reduction of 1-deoxy-D-xylulose-5-phosphate (DXP) to 2-C-methyl-D-erythritol 4-phosphate (MEP). In Campylobacter curvus (strain 525.92), this protein is 1-deoxy-D-xylulose 5-phosphate reductoisomerase.